The following is a 938-amino-acid chain: Isoleucine--tRNA ligase (938 aa).

The 'HIGH' region motif lies at 58 to 68 (PYANGSIHIGH). Position 183 is an N6-acetyllysine (Lys183). Glu561 is an L-isoleucyl-5'-AMP binding site. A 'KMSKS' region motif is present at residues 602–606 (KMSKS). Position 605 (Lys605) interacts with ATP. Zn(2+) is bound by residues Cys901, Cys904, Cys921, and Cys924.

It belongs to the class-I aminoacyl-tRNA synthetase family. IleS type 1 subfamily. Monomer. Requires Zn(2+) as cofactor.

It localises to the cytoplasm. The enzyme catalyses tRNA(Ile) + L-isoleucine + ATP = L-isoleucyl-tRNA(Ile) + AMP + diphosphate. Functionally, catalyzes the attachment of isoleucine to tRNA(Ile). As IleRS can inadvertently accommodate and process structurally similar amino acids such as valine, to avoid such errors it has two additional distinct tRNA(Ile)-dependent editing activities. One activity is designated as 'pretransfer' editing and involves the hydrolysis of activated Val-AMP. The other activity is designated 'posttransfer' editing and involves deacylation of mischarged Val-tRNA(Ile). The sequence is that of Isoleucine--tRNA ligase from Escherichia coli O9:H4 (strain HS).